Reading from the N-terminus, the 243-residue chain is Complement C1q tumor necrosis factor-related protein 5 (243 aa).

The first 15 residues, 1–15 (MRPLLVLLLLGLAAG), serve as a signal peptide directing secretion. A disordered region spans residues 15 to 125 (GSPPLDDNKI…PPPSDAPLPF (111 aa)). The region spanning 30-95 (GHPGLPGTPG…AGPAGPTGPA (66 aa)) is the Collagen-like domain. The segment covering 83-96 (RGEAGPAGPTGPAG) has biased composition (low complexity). The region spanning 99–238 (SVPPRSAFSA…GFLVYSDWHS (140 aa)) is the C1q domain.

May interact with ERFE. Homotrimer (via collagen-like domain). May form higher order oligomers by supercoiling of the trimers.

It is found in the secreted. The protein is Complement C1q tumor necrosis factor-related protein 5 (C1QTNF5) of Homo sapiens (Human).